Consider the following 374-residue polypeptide: tRNA-specific 2-thiouridylase MnmA (374 aa).

Residues 13–20 (GMSGGVDS) and methionine 39 contribute to the ATP site. The tract at residues 99–101 (NPD) is interaction with target base in tRNA. Residue cysteine 104 is the Nucleophile of the active site. Cysteines 104 and 201 form a disulfide. Residue glycine 128 participates in ATP binding. The interaction with tRNA stretch occupies residues 151–153 (KDQ). The active-site Cysteine persulfide intermediate is the cysteine 201. An interaction with tRNA region spans residues 313–314 (RY).

Belongs to the MnmA/TRMU family.

Its subcellular location is the cytoplasm. The enzyme catalyses S-sulfanyl-L-cysteinyl-[protein] + uridine(34) in tRNA + AH2 + ATP = 2-thiouridine(34) in tRNA + L-cysteinyl-[protein] + A + AMP + diphosphate + H(+). Its function is as follows. Catalyzes the 2-thiolation of uridine at the wobble position (U34) of tRNA, leading to the formation of s(2)U34. The chain is tRNA-specific 2-thiouridylase MnmA from Streptococcus equi subsp. equi (strain 4047).